The following is a 284-amino-acid chain: 4-diphosphocytidyl-2-C-methyl-D-erythritol kinase (284 aa).

The active site involves K14. 98–108 is an ATP binding site; that stretch reads PMGGGLGGGSS. The active site involves D140.

Belongs to the GHMP kinase family. IspE subfamily.

It carries out the reaction 4-CDP-2-C-methyl-D-erythritol + ATP = 4-CDP-2-C-methyl-D-erythritol 2-phosphate + ADP + H(+). The protein operates within isoprenoid biosynthesis; isopentenyl diphosphate biosynthesis via DXP pathway; isopentenyl diphosphate from 1-deoxy-D-xylulose 5-phosphate: step 3/6. Functionally, catalyzes the phosphorylation of the position 2 hydroxy group of 4-diphosphocytidyl-2C-methyl-D-erythritol. This is 4-diphosphocytidyl-2-C-methyl-D-erythritol kinase from Shewanella sp. (strain MR-4).